Here is a 395-residue protein sequence, read N- to C-terminus: Accessory Sec system protein translocase subunit SecY2 (395 aa).

The next 10 membrane-spanning stretches (helical) occupy residues 13–33 (VSFS…PLPF), 63–83 (ISIF…IQLL), 102–122 (LMQF…VFAF), 128–148 (GLED…VVWL), 157–177 (VGAS…PNII), 190–210 (WIWL…WLAF), 239–259 (MAAM…LMVG), 272–292 (VFQA…FTFV), 326–346 (LIWI…VFGL), and 355–375 (YAGF…MGGI).

It belongs to the SecY/SEC61-alpha family. SecY2 subfamily. Component of the accessory SecA2/SecY2 protein translocase complex required to export cell wall proteins. May form heterotrimers with SecE and SecG subunits.

It localises to the cell membrane. Its function is as follows. Part of the accessory SecA2/SecY2 system specifically required for export of possible cell wall proteins. The central subunit of a protein translocation channel. This Lactobacillus johnsonii (strain CNCM I-12250 / La1 / NCC 533) protein is Accessory Sec system protein translocase subunit SecY2.